Reading from the N-terminus, the 312-residue chain is Olfactory receptor 8G50 (312 aa).

The Extracellular portion of the chain corresponds to 1–28 (MAYSNQSRVTEFIISGLTNKPELQLPLF). N5 carries an N-linked (GlcNAc...) asparagine glycan. The chain crosses the membrane as a helical span at residues 29–49 (LLFLGIYLFTVLGNLGMIILI). The Cytoplasmic portion of the chain corresponds to 50-56 (LLSSHLH). Residues 57–77 (TPMYFFLSSLSFIDLCYSTII) form a helical membrane-spanning segment. The Extracellular segment spans residues 78-99 (TPKMLVNFVTTKNVISYQECMT). Residues C97 and C189 are joined by a disulfide bond. Residues 100-120 (QLYFFIAFVISECHMLAAMAY) traverse the membrane as a helical segment. At 121–143 (DRYVAICNPLLYNVTMSYQVCSW) the chain is on the cytoplasmic side. Residues 144–164 (MVGGVYGMGFIGAAIHTFCML) form a helical membrane-spanning segment. At 165-204 (RVVFCKDNIINHYFCDLFPLMELACSSTYVNEVVLLSLSA) the chain is on the extracellular side. The helical transmembrane segment at 205–225 (FNIFIPTLTILGSYIFIIISI) threads the bilayer. The Cytoplasmic segment spans residues 226–244 (LRIKSTEGRFKAFSTCSSH). Residues 245–265 (FSAVSVFFGSLAFMYLQPFSV) form a helical membrane-spanning segment. Over 266–274 (SSKDKGKVS) the chain is Extracellular. A helical transmembrane segment spans residues 275-292 (SVFYTTIVPMLNPMIYSL). Topologically, residues 293 to 312 (RNRDVKLALNKLFQKKKFHV) are cytoplasmic.

This sequence belongs to the G-protein coupled receptor 1 family.

Its subcellular location is the cell membrane. Its function is as follows. Odorant receptor. The chain is Olfactory receptor 8G50 from Mus musculus (Mouse).